The primary structure comprises 375 residues: Antichymotrypsin-2 (375 aa).

This sequence belongs to the serpin family. As to expression, hemolymph.

Its subcellular location is the secreted. This chain is Antichymotrypsin-2, found in Bombyx mori (Silk moth).